The sequence spans 236 residues: GTP cyclohydrolase 1 (236 aa).

Residues 1 to 52 (MAAARSCNGYARREGPPSPKLGTEKPRVSAGSGGSGDGWRGERPRSEEDNEL) form a disordered region. 3 residues coordinate Zn(2+): Cys127, His130, and Cys198.

This sequence belongs to the GTP cyclohydrolase I family. Toroid-shaped homodecamer, composed of two pentamers of five dimers.

It is found in the cytoplasm. It localises to the nucleus. It catalyses the reaction GTP + H2O = 7,8-dihydroneopterin 3'-triphosphate + formate + H(+). It functions in the pathway cofactor biosynthesis; 7,8-dihydroneopterin triphosphate biosynthesis; 7,8-dihydroneopterin triphosphate from GTP: step 1/1. Its activity is regulated as follows. GTP shows a positive allosteric effect, and tetrahydrobiopterin inhibits the enzyme activity. Zinc is required for catalytic activity. Inhibited by Mg(2+). In terms of biological role, may positively regulate nitric oxide synthesis in endothelial cells. May be involved in dopamine synthesis. May modify pain sensitivity and persistence. This chain is GTP cyclohydrolase 1 (GCH1), found in Gallus gallus (Chicken).